Here is a 257-residue protein sequence, read N- to C-terminus: Imidazole glycerol phosphate synthase subunit HisF (257 aa).

Active-site residues include Asp-11 and Asp-130.

It belongs to the HisA/HisF family. As to quaternary structure, heterodimer of HisH and HisF.

The protein resides in the cytoplasm. The enzyme catalyses 5-[(5-phospho-1-deoxy-D-ribulos-1-ylimino)methylamino]-1-(5-phospho-beta-D-ribosyl)imidazole-4-carboxamide + L-glutamine = D-erythro-1-(imidazol-4-yl)glycerol 3-phosphate + 5-amino-1-(5-phospho-beta-D-ribosyl)imidazole-4-carboxamide + L-glutamate + H(+). It functions in the pathway amino-acid biosynthesis; L-histidine biosynthesis; L-histidine from 5-phospho-alpha-D-ribose 1-diphosphate: step 5/9. Functionally, IGPS catalyzes the conversion of PRFAR and glutamine to IGP, AICAR and glutamate. The HisF subunit catalyzes the cyclization activity that produces IGP and AICAR from PRFAR using the ammonia provided by the HisH subunit. This is Imidazole glycerol phosphate synthase subunit HisF from Bradyrhizobium diazoefficiens (strain JCM 10833 / BCRC 13528 / IAM 13628 / NBRC 14792 / USDA 110).